The following is a 417-amino-acid chain: 3-isopropylmalate dehydratase large subunit 2 (417 aa).

[4Fe-4S] cluster contacts are provided by Cys-298, Cys-358, and Cys-361.

Belongs to the aconitase/IPM isomerase family. LeuC type 2 subfamily. Heterodimer of LeuC and LeuD. It depends on [4Fe-4S] cluster as a cofactor.

The catalysed reaction is (2R,3S)-3-isopropylmalate = (2S)-2-isopropylmalate. It functions in the pathway amino-acid biosynthesis; L-leucine biosynthesis; L-leucine from 3-methyl-2-oxobutanoate: step 2/4. In terms of biological role, catalyzes the isomerization between 2-isopropylmalate and 3-isopropylmalate, via the formation of 2-isopropylmaleate. The polypeptide is 3-isopropylmalate dehydratase large subunit 2 (Thermotoga maritima (strain ATCC 43589 / DSM 3109 / JCM 10099 / NBRC 100826 / MSB8)).